A 770-amino-acid chain; its full sequence is ARF GTPase-activating protein GIT1 (770 aa).

Positions 1–124 constitute an Arf-GAP domain; it reads MSRKGPRAEV…AFVHKLPCRD (124 aa). Residues 1–124 form an interaction with gamma-tubulin and localization to the centrosome region; that stretch reads MSRKGPRAEV…AFVHKLPCRD (124 aa). The segment at 11–34 adopts a C4-type zinc-finger fold; the sequence is CADCSAPDPGWASISRGVLVCDEC. 3 ANK repeats span residues 132–161, 166–195, and 199–228; these read DLSK…QANF, KGTT…DPGS, and NGRT…ELTD. Position 224 is a phosphotyrosine (Y224). Residues 245-374 are interaction with PCLO; that stretch reads HYIIPQMADR…QGKSLSSPTD (130 aa). The interaction with PTK2/FAK1 stretch occupies residues 253 to 424; that stretch reads DRSRQKCMSQ…NRARSMDSSD (172 aa). The tract at residues 254-376 is interaction with ARHGEF7; the sequence is RSRQKCMSQS…KSLSSPTDNL (123 aa). The disordered stretch occupies residues 363-425; that stretch reads RQQGKSLSSP…RARSMDSSDL (63 aa). Positions 366 to 383 are enriched in polar residues; the sequence is GKSLSSPTDNLELSARSQ. Phosphoserine is present on residues S368 and S371. T373 carries the post-translational modification Phosphothreonine. Residues 375–596 are interaction with NCK2 and GRIN3A; sequence NLELSARSQS…QEGSRHASKL (222 aa). A required for localization at synapses region spans residues 375 to 596; sequence NLELSARSQS…QEGSRHASKL (222 aa). Phosphoserine is present on residues S379 and S384. Phosphotyrosine is present on Y392. A phosphoserine mark is found at S394 and S397. A compositionally biased stretch (acidic residues) spans 394 to 403; that stretch reads SVASDEDTDQ. T401 carries the phosphothreonine modification. A phosphoserine mark is found at S419, S422, and S426. Positions 420–475 are interaction with MAPK1; that stretch reads MDSSDLSDGAVTLQEYLELKKALATSEAKVQQLMKVNSSLSDELRRLQREIHKLQA. The tract at residues 429–629 is interaction with IKBKG; it reads AVTLQEYLEL…EGKRFLELSK (201 aa). Residues 449–483 are a coiled coil; the sequence is VQQLMKVNSSLSDELRRLQREIHKLQAENLQLRQP. S507 and S545 each carry phosphoserine. T546 is subject to Phosphothreonine. Phosphotyrosine is present on residues Y554 and Y563. Phosphoserine occurs at positions 570, 580, 601, and 605. Residues 578-588 show a composition bias toward polar residues; that stretch reads PSSPLLSCSQE. Positions 578–615 are disordered; that stretch reads PSSPLLSCSQEGSRHASKLSRHGSGADSDYENTQSGDP. Position 610 is a phosphothreonine (T610). At S639 the chain carries Phosphoserine. The interaction with PXN and TGFB1I1 stretch occupies residues 646–770; sequence PGLPSTEDVI…VTITTREKKQ (125 aa).

In terms of assembly, forms homodimers and possibly oligomers. May forms heterooligomers with GIT2. Interacts with G protein-coupled receptor kinases, including GRK2, GRK3, GRK5 and GRK6. Interacts with PPFIA1, PPFIA2 and PPFIA4. Interacts with GRIP1 and forms a ternary complex with PPFIA1 and GRIP1. Directly interacts with ARHGEF7/beta-PIX, forming in vitro a heptameric complex made of a GIT1 dimer and an ARHGEF7 trimer. Directly interacts with PXN/paxillin; this interaction is enhanced in the presence of ARHGEF7. Directly interacts (via C-terminus) with TGFB1I1/Hic-5 (via LD motif 3). Directly interacts with PTK2/FAK1. May interact with PTK2B/PYK2; this interaction may be indirect. Interacts with AMPA receptors GRIA2/3. Directly interacts with protein Piccolo/PCLO. Forms a complex with Ephrin-B1/EFNB1 and NCK2/GRB4 (via SH2); this interaction is important for spine morphogenesis and synapse formation. Interaction with NCK2 is transient and depends upon GIT1 phosphorylation at Tyr-392. Interacts with GRIN3A/GluN3A (via C-terminus); this interaction competes with GIT1 interaction with ARHGEF7 and limits synaptic localization of GIT1. Interacts with IKBKG/NEMO in resting bone mesenchymal stem cells, as well as in TNF-stimulated cells; this interaction may increase IKBKG affinity for 'Lys-63'-linked polyubiquitin chains. Interacts with GABA(A) receptors, including GABRB3 and GABRG2. Interacts with SCRIB. Interacts (via N- and C-terminus) with ENTR1/SDCCAG3 (via N-terminus); this interaction is direct. May form a tripartite complex with ENTR1 and PTPN13. Interacts with YWHAZ. Interacts with PAK1. Interacts with PAK3. Directly interacts (via N-terminus) with gamma-tubulin. Interacts with MAPK1 and MAPK3; this interaction is required for MAPK1/3 recruitment to focal adhesions. Post-translationally, phosphorylated on tyrosine residues by PTK2/FAK1 and SRC in growing fibroblasts. Phosphorylation at Tyr-392 is induced by activation of Ephrin-B1/EFNB1 and catalyzed by SRC family kinases. It is required for the interaction with NCK2 and for GIT1 recruitment to synapses in hippocampal neurons. In terms of tissue distribution, expressed in the brain (at protein level). Also expressed at high levels in lung and heart. In lung, expressed in endothelial cells, especially in capillaries; also expressed in smooth muscle and epithelial cells of bronchi (at protein level). Expressed in bone marrow mesenchymal stem cells, as well as in osteoclasts and bone marrow-derived macrophages (at protein level).

Its subcellular location is the cytoplasm. It localises to the presynapse. It is found in the postsynapse. The protein resides in the postsynaptic density. The protein localises to the cell junction. Its subcellular location is the focal adhesion. It localises to the cell projection. It is found in the lamellipodium. The protein resides in the cytoskeleton. The protein localises to the microtubule organizing center. Its subcellular location is the centrosome. It localises to the spindle pole. Functionally, GTPase-activating protein for ADP ribosylation factor family members, including ARF1. Multidomain scaffold protein that interacts with numerous proteins and therefore participates in many cellular functions, including receptor internalization, focal adhesion remodeling, and signaling by both G protein-coupled receptors and tyrosine kinase receptors. Through PAK1 activation, positively regulates microtubule nucleation during interphase. Plays a role in the regulation of cytokinesis; for this function, may act in a pathway also involving ENTR1 and PTPN13. May promote cell motility both by regulating focal complex dynamics and by the activation of RAC1. May act as scaffold for MAPK1/3 signal transduction, recruiting MAPK1/3 to focal adhesions after EGF stimulation via a Src-dependent pathway, hence stimulating cell migration. Plays a role in brain development and function. Involved in the regulation of spine density and synaptic plasticity that is required for processes involved in learning. Plays an important role in dendritic spine morphogenesis and synapse formation. In hippocampal neurons, recruits guanine nucleotide exchange factors (GEFs), such as ARHGEF7/beta-PIX, to the synaptic membrane. These in turn locally activate RAC1, which is an essential step for spine morphogenesis and synapse formation. May contribute to the organization of presynaptic active zones through oligomerization and formation of a Piccolo/PCLO-based protein network, which includes ARHGEF7/beta-PIX and FAK1. In neurons, through its interaction with liprin-alpha family members, may be required for AMPA receptor (GRIA2/3) proper targeting to the cell membrane. In complex with GABA(A) receptors and ARHGEF7, plays a crucial role in regulating GABA(A) receptor synaptic stability, maintaining GPHN/gephyrin scaffolds and hence GABAergic inhibitory synaptic transmission, by locally coordinating RAC1 and PAK1 downstream effector activity, leading to F-actin stabilization. May also be important for RAC1 downstream signaling pathway through PAK3 and regulation of neuronal inhibitory transmission at presynaptic input. Required for successful bone regeneration during fracture healing. The function in intramembranous ossification may, at least partly, exerted by macrophages in which GIT1 is a key negative regulator of redox homeostasis, IL1B production, and glycolysis, acting through the ERK1/2/NRF2/NFE2L2 axis. May play a role in angiogenesis during fracture healing. In this process, may regulate activation of the canonical NF-kappa-B signal in bone mesenchymal stem cells by enhancing the interaction between NEMO and 'Lys-63'-ubiquitinated RIPK1/RIP1, eventually leading to enhanced production of VEGFA and others angiogenic factors. Essential for VEGF signaling through the activation of phospholipase C-gamma and ERK1/2, hence may control endothelial cell proliferation and angiogenesis. In Mus musculus (Mouse), this protein is ARF GTPase-activating protein GIT1 (Git1).